A 386-amino-acid polypeptide reads, in one-letter code: Acetylornithine aminotransferase (386 aa).

Residues 94 to 95 (GT) and Phe121 contribute to the pyridoxal 5'-phosphate site. A N(2)-acetyl-L-ornithine-binding site is contributed by Arg124. 206–209 (DEVQ) contributes to the pyridoxal 5'-phosphate binding site. Position 235 is an N6-(pyridoxal phosphate)lysine (Lys235). Residue Ser263 coordinates N(2)-acetyl-L-ornithine. Thr264 contributes to the pyridoxal 5'-phosphate binding site.

This sequence belongs to the class-III pyridoxal-phosphate-dependent aminotransferase family. ArgD subfamily. As to quaternary structure, homodimer. Requires pyridoxal 5'-phosphate as cofactor.

It localises to the cytoplasm. The enzyme catalyses N(2)-acetyl-L-ornithine + 2-oxoglutarate = N-acetyl-L-glutamate 5-semialdehyde + L-glutamate. Its pathway is amino-acid biosynthesis; L-arginine biosynthesis; N(2)-acetyl-L-ornithine from L-glutamate: step 4/4. The protein is Acetylornithine aminotransferase of Listeria monocytogenes serotype 4b (strain F2365).